Consider the following 473-residue polypeptide: Keratin, type I cuticular Ha6 (473 aa).

Residues 1 to 93 (MATQICTPTF…FCEGAFNGNE (93 aa)) are head. One can recognise an IF rod domain in the interval 93–404 (EKATMQILND…RLLDGEDCKL (312 aa)). The interval 94–128 (KATMQILNDRLANYLEKVRQLEQENTQLECRIREW) is coil 1A. The interval 129–139 (YECQIPYICPD) is linker 1. A coil 1B region spans residues 140 to 240 (YQSYFKTAEE…HEEEVNALRS (101 aa)). A linker 12 region spans residues 241 to 256 (QLGDRLNVEVDAAPPV). The coil 2 stretch occupies residues 257–400 (DLNKILDDMR…ATYRRLLDGE (144 aa)). A tail region spans residues 401–473 (DCKLPAHPCS…SREHVVPRAM (73 aa)).

It belongs to the intermediate filament family. Heterotetramer of two type I and two type II keratins. In skin, only expressed in the suprabasal cells of tail scale epidermis. Suprabasally expressed in stratified squamous epithelia and also in the posterior unit of the complex filiform papillae of tongue. Expressed in rare anatomical sites in which an orthokeratinized stratum corneum would be too soft and a hard keratinized structure would be too rigid to meet the functional requirement of the respective epithelia.

This chain is Keratin, type I cuticular Ha6, found in Mus musculus (Mouse).